A 283-amino-acid chain; its full sequence is Elongation factor Ts (283 aa).

Positions 80–83 are involved in Mg(2+) ion dislocation from EF-Tu; sequence TDFV.

Belongs to the EF-Ts family.

Its subcellular location is the cytoplasm. Associates with the EF-Tu.GDP complex and induces the exchange of GDP to GTP. It remains bound to the aminoacyl-tRNA.EF-Tu.GTP complex up to the GTP hydrolysis stage on the ribosome. This is Elongation factor Ts from Klebsiella pneumoniae (strain 342).